The following is an 82-amino-acid chain: Metallothionein (82 aa).

Cd(2+) is bound by residues Cys6, Cys8, Cys11, Cys13, Cys29, Cys33, His37, Cys43, Cys48, and Cys50. Cys6, Cys8, and Cys11 together coordinate Zn(2+). Residues Cys29, Cys33, His37, Cys43, Cys48, and Cys50 each coordinate Zn(2+). Residues 61 to 82 form a disordered region; that stretch reads ITNNQLDEALEETFPASDPISP.

The protein belongs to the metallothionein superfamily.

Metallothioneins are small proteins that have a high content of cysteine residues which allow them to bind heavy metal ions through clusters of thiolate bonds. Preferentially, binds four Cd(2+) ions. Also binds three Zn(2+) ions but with less affinity. Required for long-term viability. May play a role in the storage or sequestration of metals when present in excess. The polypeptide is Metallothionein (Pseudomonas fluorescens (strain Q2-87)).